The sequence spans 341 residues: uncharacterized protein (341 aa).

The protein belongs to the cycloisomerase 2 family.

This is an uncharacterized protein from Lactococcus lactis subsp. lactis (strain IL1403) (Streptococcus lactis).